The chain runs to 325 residues: Protein ORANGE-ORANGE, chloroplastic (325 aa).

Residues 1 to 54 (MDRVLVASYPINHLIRPHSFRIDYCWSTCFTSRLNSGKERQKLSSRWRWRSMAS) constitute a chloroplast transit peptide. Residues 53-71 (ASDSTDSSSSSSFAPSVES) show a composition bias toward low complexity. The tract at residues 53 to 77 (ASDSTDSSSSSSFAPSVESDPSDKT) is disordered. 2 consecutive transmembrane segments (helical) span residues 164 to 184 (LYYV…GLLA) and 217 to 237 (IVAS…VVEV). Residues 226–317 (VGVISALMVV…CTGMAMASEH (92 aa)) are CR-type-like. A CXXCXGXG motif repeat occupies 248–255 (CKYCLGTG). The stretch at 259 to 266 (CARCSNTG) is one CXXCXXXG motif repeat. A CXXCXGXG motif repeat occupies 292–299 (CQNCSGSG). Residues 303 to 310 (CPTCLCTG) form a CXXCXXXG motif repeat.

It belongs to the orange-like family.

The protein resides in the plastid. Its subcellular location is the chloroplast membrane. Its function is as follows. Triggers accumulation of carotenoids, mainly beta-carotene, in fruit flesh. The polypeptide is Protein ORANGE-ORANGE, chloroplastic (Cucumis melo (Muskmelon)).